The sequence spans 449 residues: MASSSLHFFFFLTLLLPFTFTTATRDTCATAAPDGSDDLSIIPINAKCSPFAPTHVSASVIDTVLHMASSDSHRLTYLSSLVAGKPKPTSVPVASGNQLHIGNYVVRAKLGTPPQLMFMVLDTSNDAVWLPCSGCSGCSNASTSFNTNSSSTYSTVSCSTAQCTQARGLTCPSSSPQPSVCSFNQSYGGDSSFSASLVQDTLTLAPDVIPNFSFGCINSASGNSLPPQGLMGLGRGPMSLVSQTTSLYSGVFSYCLPSFRSFYFSGSLKLGLLGQPKSIRYTPLLRNPRRPSLYYVNLTGVSVGSVQVPVDPVYLTFDANSGAGTIIDSGTVITRFAQPVYEAIRDEFRKQVNVSSFSTLGAFDTCFSADNENVAPKITLHMTSLDLKLPMENTLIHSSAGTLTCLSMAGIRQNANAVLNVIANLQQQNLRILFDVPNSRIGIAPEPCN.

The first 23 residues, 1–23 (MASSSLHFFFFLTLLLPFTFTTA), serve as a signal peptide directing secretion. Positions 104–444 (YVVRAKLGTP…DVPNSRIGIA (341 aa)) constitute a Peptidase A1 domain. The active site involves Asp122. Cys132 and Cys138 form a disulfide bridge. Asn140, Asn148, Asn184, Asn211, and Asn297 each carry an N-linked (GlcNAc...) asparagine glycan. Asp328 is an active-site residue. Asn353 carries an N-linked (GlcNAc...) asparagine glycan. The cysteines at positions 366 and 405 are disulfide-linked.

It belongs to the peptidase A1 family.

It localises to the secreted. Its subcellular location is the extracellular space. It is found in the apoplast. The sequence is that of Aspartyl protease AED3 from Arabidopsis thaliana (Mouse-ear cress).